The chain runs to 396 residues: MAKEKFERNKPHCNIGTIGHVDHGKTTLTAAITIILAKSGGATAKNYADIDAAPEEKARGITINTAHVEYETANRHYAHVDCPGHADYVKNMITGAAQMDGAILVVSAADGPMPQTREHILLARQVGVPALVVYMNKVDLVDDEELLELVEMEVRELLSSYDFPGDDIPITKGSAKVAIDGGDPVIGEQSILALMKTVDDYIPQPDRPIDLPFLMPVEDVFSISGRGTVVTGRIEKGVVKVGEEVEIVGIRAVQKTTCTGVEMFRKLLDQGQAGDNVGVLLRGTKREDVERGQVLCKPGSITPHTKFVAEAYILTKEEGGRHTPFFTNYRPQFYFRTTDVTGIIKLREGVEMIMPGDNAELDVELITPIAMDQGLRFAIREGGRTVGAGVVAKIVE.

In terms of domain architecture, tr-type G spans 10–206; that stretch reads KPHCNIGTIG…TVDDYIPQPD (197 aa). The interval 19 to 26 is G1; it reads GHVDHGKT. 19–26 serves as a coordination point for GTP; it reads GHVDHGKT. Position 26 (Thr-26) interacts with Mg(2+). The tract at residues 60–64 is G2; sequence GITIN. A G3 region spans residues 81–84; sequence DCPG. GTP contacts are provided by residues 81–85 and 136–139; these read DCPGH and NKVD. The tract at residues 136–139 is G4; it reads NKVD. Residues 174–176 are G5; the sequence is SAK.

The protein belongs to the TRAFAC class translation factor GTPase superfamily. Classic translation factor GTPase family. EF-Tu/EF-1A subfamily. As to quaternary structure, monomer.

It is found in the cytoplasm. It carries out the reaction GTP + H2O = GDP + phosphate + H(+). Its function is as follows. GTP hydrolase that promotes the GTP-dependent binding of aminoacyl-tRNA to the A-site of ribosomes during protein biosynthesis. The polypeptide is Elongation factor Tu 1 (Caulobacter sp. (strain K31)).